Consider the following 1063-residue polypeptide: Endo-1,4-beta-xylanase 2 (1063 aa).

CBM-cenC domains are found at residues 5-146 (NIVM…GPAP), 183-313 (NIIK…LEGP), 348-482 (NHIF…IEGP), and 517-662 (NIVS…QGPS). Positions 711-1006 (SGATVKIRQT…NEAGKRFLEI (296 aa)) constitute a GH10 domain. Glu840 acts as the Proton donor in catalysis. Glu941 serves as the catalytic Nucleophile.

Belongs to the glycosyl hydrolase 10 (cellulase F) family.

The catalysed reaction is Endohydrolysis of (1-&gt;4)-beta-D-xylosidic linkages in xylans.. It functions in the pathway glycan degradation; xylan degradation. Functionally, binds to and hydrolyzes insoluble and soluble xylan substrates. The protein is Endo-1,4-beta-xylanase 2 of Arabidopsis thaliana (Mouse-ear cress).